The primary structure comprises 99 residues: Protein MOST-1 (99 aa).

As to quaternary structure, interacts with TSPO, IGHM and IGHD. In terms of tissue distribution, expressed in the heart, kidney, liver, pancreas, small intestine, ovary, testis, prostate and thymus. Expressed in all of the cancer cell lines tested.

The protein localises to the cytoplasm. Its subcellular location is the microsome membrane. It is found in the endoplasmic reticulum membrane. May be involved in cell survival, proliferation and progression of cancer cells. The sequence is that of Protein MOST-1 (C8orf17) from Homo sapiens (Human).